Here is a 512-residue protein sequence, read N- to C-terminus: GMP synthase [glutamine-hydrolyzing] (512 aa).

The region spanning 7 to 197 is the Glutamine amidotransferase type-1 domain; it reads TIIVLDFGSQ…VFGVCGCSEG (191 aa). Cys-84 (nucleophile) is an active-site residue. Catalysis depends on residues His-171 and Glu-173. Residues 198–387 form the GMPS ATP-PPase domain; that stretch reads WNMENFIEVE…LGIPDEIVWR (190 aa). 225-231 lines the ATP pocket; sequence SGGVDSS.

Homodimer.

The enzyme catalyses XMP + L-glutamine + ATP + H2O = GMP + L-glutamate + AMP + diphosphate + 2 H(+). It functions in the pathway purine metabolism; GMP biosynthesis; GMP from XMP (L-Gln route): step 1/1. Catalyzes the synthesis of GMP from XMP. The polypeptide is GMP synthase [glutamine-hydrolyzing] (Bacillus cytotoxicus (strain DSM 22905 / CIP 110041 / 391-98 / NVH 391-98)).